Consider the following 453-residue polypeptide: Ribosome biogenesis protein SSF2 (453 aa).

The segment covering 1–11 has biased composition (basic residues); sequence MAKRRQKKRTH. Disordered stretches follow at residues 1–22, 275–327, and 373–453; these read MAKR…ERDI, KAKH…KAIK, and AKMR…SEVE. The Brix domain maps to 26-348; sequence MVIRVGQTSL…LVKIEDGICS (323 aa). A compositionally biased stretch (basic and acidic residues) spans 373 to 398; sequence AKMRLKEQRRKEQEENIAKKKAVKDA. Residues 399–409 show a composition bias toward basic residues; the sequence is KKQRKLERRKA. Residues 440 to 453 are compositionally biased toward acidic residues; sequence VPEDLDSDLFSEVE.

In terms of assembly, part of a complex that includes BRX1, RPF1, RPF2 and SSF1 or SSF2.

It localises to the nucleus. The protein resides in the nucleolus. In terms of biological role, required for biogenesis of the 60S ribosomal subunit. The chain is Ribosome biogenesis protein SSF2 (SSF2) from Saccharomyces cerevisiae (strain ATCC 204508 / S288c) (Baker's yeast).